The chain runs to 369 residues: Somatostatin receptor type 2 (369 aa).

The Extracellular segment spans residues 1–43 (MDMAYELLNGSQPWLSSPFDLNGSVATANSSNQTEPYYDLTSN). N-linked (GlcNAc...) asparagine glycans are attached at residues asparagine 9, asparagine 22, asparagine 29, and asparagine 32. A helical membrane pass occupies residues 44-67 (AVLTFIYFVVCIIGLCGNTLVIYV). Topologically, residues 68-78 (ILRYAKMKTIT) are cytoplasmic. The chain crosses the membrane as a helical span at residues 79–103 (NIYILNLAIADELFMLGLPFLAMQV). The Extracellular portion of the chain corresponds to 104–118 (ALVHWPFGKAICRVV). The cysteines at positions 115 and 193 are disulfide-linked. The helical transmembrane segment at 119 to 138 (MTVDGINQFTSIFCLTVMSI) threads the bilayer. At 139 to 161 (DRYLAVVHPIKSAKWRRPRTAKM) the chain is on the cytoplasmic side. Residues 162–181 (INVAVWGVSLLVILPIMIYA) traverse the membrane as a helical segment. The Extracellular portion of the chain corresponds to 182–207 (GLRSNQWGRSSCTINWPGESGAWYTG). A helical membrane pass occupies residues 208–229 (FIIYAFILGFLVPLTIICLCYL). At 230-253 (FIIIKVKSSGIRVGSSKRKKSEKK) the chain is on the cytoplasmic side. The helical transmembrane segment at 254–278 (VTRMVSIVVAVFIFCWLPFYIFNVS) threads the bilayer. Residues 279-288 (SVSVAISPTP) lie on the Extracellular side of the membrane. Residues 289 to 303 (ALKGMFDFVVVLTYA) form a helical membrane-spanning segment. The Cytoplasmic segment spans residues 304 to 369 (NSCANPILYA…LLNGDLQTSI (66 aa)). The S-palmitoyl cysteine moiety is linked to residue cysteine 328. Phosphoserine is present on residues serine 341, serine 343, and serine 348. Phosphothreonine occurs at positions 353 and 354.

It belongs to the G-protein coupled receptor 1 family. Homodimer and heterodimer with SSTR3 and SSTR5. Heterodimerization with SSTR3 inactivates SSTR3 receptor function. Heterodimerization with SSTR5 is enhanced by agonist stimulation of SSTR2 and increases SSTR2 cell growth inhibition activity. Following agonist stimulation, homodimers dissociate into monomers which is required for receptor internalization. Interacts with beta-arrestin; this interaction is necessary for receptor internalization and is destabilized by heterodimerization with SSTR5 which results in increased recycling of SSTR2 to the cell surface. Interacts (via C-terminus) with SHANK1 (via PDZ domain). In terms of processing, phosphorylated on serine and threonine residues in response to agonist stimulation, leading to receptor desensitization and rapid internalization. Phosphorylated to a greater extent on serine than threonine residues. Threonine phosphorylation is required for arrestin binding and receptor endocytosis but is not necessary for desensitization.

Its subcellular location is the cell membrane. The protein localises to the cytoplasm. Receptor for somatostatin-14 and -28. This receptor is coupled via pertussis toxin sensitive G proteins to inhibition of adenylyl cyclase. In addition it stimulates phosphotyrosine phosphatase and PLC via pertussis toxin insensitive as well as sensitive G proteins. Inhibits calcium entry by suppressing voltage-dependent calcium channels. Acts as the functionally dominant somatostatin receptor in pancreatic alpha- and beta-cells where it mediates the inhibitory effect of somatostatin-14 on hormone secretion. Inhibits cell growth through enhancement of MAPK1 and MAPK2 phosphorylation and subsequent up-regulation of CDKN1B. Stimulates neuronal migration and axon outgrowth and may participate in neuron development and maturation during brain development. Mediates negative regulation of insulin receptor signaling through PTPN6. Inactivates SSTR3 receptor function following heterodimerization. In Sus scrofa (Pig), this protein is Somatostatin receptor type 2 (SSTR2).